Consider the following 427-residue polypeptide: Serine--tRNA ligase (427 aa).

231–233 (TAE) contacts L-serine. Residue 262-264 (RSE) participates in ATP binding. Glutamate 285 provides a ligand contact to L-serine. 349–352 (EISS) provides a ligand contact to ATP. Serine 385 serves as a coordination point for L-serine.

It belongs to the class-II aminoacyl-tRNA synthetase family. Type-1 seryl-tRNA synthetase subfamily. Homodimer. The tRNA molecule binds across the dimer.

It localises to the cytoplasm. The catalysed reaction is tRNA(Ser) + L-serine + ATP = L-seryl-tRNA(Ser) + AMP + diphosphate + H(+). It catalyses the reaction tRNA(Sec) + L-serine + ATP = L-seryl-tRNA(Sec) + AMP + diphosphate + H(+). The protein operates within aminoacyl-tRNA biosynthesis; selenocysteinyl-tRNA(Sec) biosynthesis; L-seryl-tRNA(Sec) from L-serine and tRNA(Sec): step 1/1. Its function is as follows. Catalyzes the attachment of serine to tRNA(Ser). Is also able to aminoacylate tRNA(Sec) with serine, to form the misacylated tRNA L-seryl-tRNA(Sec), which will be further converted into selenocysteinyl-tRNA(Sec). The protein is Serine--tRNA ligase of Listeria monocytogenes serotype 4b (strain CLIP80459).